The sequence spans 388 residues: MNKQIFVLYFNIFLIFLGIGLVIPVLPVYLKDLGLTGSDLGLLVAAFALSQMIISPFGGTLADKLGKKLIICIGLILFSVSEFMFAVGHNFSVLMLSRVIGGMSAGMVMPGVTGLIADISPSHQKAKNFGYMSAIINSGFILGPGIGGFMAEVSHRMPFYFAGALGILAFIMSIVLIHDPKKSTTSGFQKLEPQLLTKINWKVFITPVILTLVLSFGLSAFETLYSLYTADKVNYSPKDISIAITGGGIFGALFQIYFFDKFMKYFSELTFIAWSLLYSVVVLILLVFANDYWSIMLISFVVFIGFDMIRPAITNYFSNIAGERQGFAGGLNSTFTSMGNFIGPLIAGALFDVHIEAPIYMAIGVSLAGVVIVLIEKQHRAKLKEQNM.

The next 12 membrane-spanning stretches (helical) occupy residues 5-25 (IFVLYFNIFLIFLGIGLVIPV), 42-62 (LLVAAFALSQMIISPFGGTLA), 69-89 (LIICIGLILFSVSEFMFAVGH), 99-119 (VIGGMSAGMVMPGVTGLIADI), 129-149 (FGYMSAIINSGFILGPGIGGF), 157-177 (MPFYFAGALGILAFIMSIVLI), 201-221 (WKVFITPVILTLVLSFGLSAF), 239-259 (DISIAITGGGIFGALFQIYFF), 269-289 (LTFIAWSLLYSVVVLILLVFA), 293-313 (WSIMLISFVVFIGFDMIRPAI), 331-351 (LNSTFTSMGNFIGPLIAGALF), and 355-375 (IEAPIYMAIGVSLAGVVIVLI).

This sequence belongs to the major facilitator superfamily. TCR/Tet family.

It localises to the cell membrane. Its function is as follows. Involved in quinolone resistance. May constitute a membrane-associated active efflux pump of hydrophilic quinolones. The polypeptide is Quinolone resistance protein NorA (norA) (Staphylococcus aureus (strain COL)).